The chain runs to 395 residues: Nicotinate phosphoribosyltransferase (395 aa).

Position 222 is a phosphohistidine; by autocatalysis (H222).

The protein belongs to the NAPRTase family. Transiently phosphorylated on a His residue during the reaction cycle. Phosphorylation strongly increases the affinity for substrates and increases the rate of nicotinate D-ribonucleotide production. Dephosphorylation regenerates the low-affinity form of the enzyme, leading to product release.

The enzyme catalyses nicotinate + 5-phospho-alpha-D-ribose 1-diphosphate + ATP + H2O = nicotinate beta-D-ribonucleotide + ADP + phosphate + diphosphate. The protein operates within cofactor biosynthesis; NAD(+) biosynthesis; nicotinate D-ribonucleotide from nicotinate: step 1/1. Catalyzes the synthesis of beta-nicotinate D-ribonucleotide from nicotinate and 5-phospho-D-ribose 1-phosphate at the expense of ATP. This Polaromonas sp. (strain JS666 / ATCC BAA-500) protein is Nicotinate phosphoribosyltransferase.